Here is a 234-residue protein sequence, read N- to C-terminus: Glucosamine-6-phosphate deaminase (234 aa).

The active-site Proton acceptor; for enolization step is the Asp62. Asn128 acts as the For ring-opening step in catalysis. Catalysis depends on His130, which acts as the Proton acceptor; for ring-opening step. Glu135 acts as the For ring-opening step in catalysis.

The protein belongs to the glucosamine/galactosamine-6-phosphate isomerase family. NagB subfamily.

It carries out the reaction alpha-D-glucosamine 6-phosphate + H2O = beta-D-fructose 6-phosphate + NH4(+). It participates in amino-sugar metabolism; N-acetylneuraminate degradation; D-fructose 6-phosphate from N-acetylneuraminate: step 5/5. In terms of biological role, catalyzes the reversible isomerization-deamination of glucosamine 6-phosphate (GlcN6P) to form fructose 6-phosphate (Fru6P) and ammonium ion. This Streptococcus equi subsp. zooepidemicus (strain H70) protein is Glucosamine-6-phosphate deaminase.